Consider the following 1951-residue polypeptide: [F-actin]-monooxygenase MICAL2 (1951 aa).

The tract at residues 2–494 (GENEDEKQAQ…KHLYITKEMD (493 aa)) is monooxygenase domain. FAD-binding positions include C97, 116-118 (EKR), 123-125 (RNN), F183, Y298, and D398. The region spanning 516-619 (DIRPNKLLTW…MVMYLSKFYE (104 aa)) is the Calponin-homology (CH) domain. S631 is modified (phosphoserine). A Nuclear localization signal motif is present at residues 660-681 (RKRTPRVDTQTEENDMNKRRRQ). Disordered regions lie at residues 663 to 712 (TPRV…SQNK) and 891 to 921 (KRVP…AADS). Positions 691 to 700 (SFSSRSLGSS) are enriched in low complexity. Positions 896–909 (AHPPSPPSCLPSPH) are enriched in pro residues. Low complexity predominate over residues 910 to 921 (PAAASSPPAADS). The 63-residue stretch at 991-1053 (DTCYFCKKRV…KPHFVHCKTS (63 aa)) folds into the LIM zinc-binding domain. Residues C993, C996, H1014, C1017, C1020, C1023, C1043, and H1046 each coordinate Zn(2+). Position 1052 is a phosphoserine (T1052). 10 disordered regions span residues 1054–1141 (SKQR…RISP), 1158–1314 (TSED…VSPT), 1348–1368 (VEPG…EGCQ), 1383–1427 (ILGK…RKLG), 1451–1476 (HKTG…TCSS), 1489–1580 (QKKA…AKKA), 1594–1624 (AQAS…STTP), 1678–1697 (GDFF…VPSL), 1706–1731 (STSM…GEGG), and 1747–1766 (PVTE…EADS). A compositionally biased stretch (basic and acidic residues) spans 1061–1070 (AELNQQREEE). Composition is skewed to polar residues over residues 1129–1138 (PRPSEWTSVR), 1228–1239 (HSLQSPTPSKYQ), and 1246–1256 (QSNSTPMNQRA). Pro residues predominate over residues 1257 to 1268 (PSPPKEPPPPPS). Residues 1269–1285 (LSSSSSLPSSFSSASVP) are compositionally biased toward low complexity. The segment covering 1291-1306 (DSSSPQVTYNLHSPQI) has biased composition (polar residues). The tract at residues 1314–1353 (TPIYLRRARAQGIVKEIPLYLPHSPMLESTEDCLVEPGRE) is interaction with MAPK1. Residues 1350-1359 (PGRESLRSPE) are compositionally biased toward basic and acidic residues. Basic and acidic residues predominate over residues 1532-1545 (EAGKKTSPKPESKT). The segment covering 1599 to 1616 (LSLPNSILRSRSLPSRPS) has biased composition (low complexity). Basic and acidic residues predominate over residues 1678 to 1688 (GDFFNSPKEEG). S1683 is modified (phosphoserine). The span at 1706–1720 (STSMGQVAHPSSTGQ) shows a compositional bias: polar residues. Residues 1749 to 1759 (TEATSSPTSSS) are compositionally biased toward low complexity. One can recognise a bMERB domain in the interval 1789-1939 (KQEELKRLHK…ERTQDQHFEN (151 aa)).

It belongs to the Mical family. In terms of assembly, interacts with PLXNA4. Interacts with RAB1B. Interacts with MAPK1/ERK2. Interacts with RAB1B, RAB35, RAB8A, RAB10, RAB13 and RAB15 (in their GTP-bound forms); binding to RAB1B and RAB35 is of low affinity compared to other Rab proteins; binding to RAB1B and RAB35 is of low affinity compared to other Rab proteins; at least in case of RAB8A may bind 2 molecules of RAB8A simultaneously through a high and a low affinity binding site, respectively. FAD serves as cofactor. In terms of tissue distribution, expressed only in testis (at protein level).

It localises to the cytoplasm. Its subcellular location is the nucleus. It carries out the reaction L-methionyl-[F-actin] + NADPH + O2 + H(+) = L-methionyl-(R)-S-oxide-[F-actin] + NADP(+) + H2O. In terms of biological role, methionine monooxygenase that promotes depolymerization of F-actin by mediating oxidation of residues 'Met-44' and 'Met-47' on actin to form methionine-sulfoxide, resulting in actin filament disassembly and preventing repolymerization. Regulates the disassembly of branched actin networks also by oxidizing ARP3B-containing ARP2/3 complexes leading to ARP3B dissociation from the network. Acts as a key regulator of the SRF signaling pathway elicited by nerve growth factor and serum: mediates oxidation and subsequent depolymerization of nuclear actin, leading to increase MKL1/MRTF-A presence in the nucleus and promote SRF:MKL1/MRTF-A-dependent gene transcription. Does not activate SRF:MKL1/MRTF-A through RhoA. This is [F-actin]-monooxygenase MICAL2 from Mus musculus (Mouse).